The sequence spans 173 residues: ATP synthase subunit b (173 aa).

Residues 18 to 38 (IFWSLVILIIVAVFFYKFFLP) form a helical membrane-spanning segment.

It belongs to the ATPase B chain family. F-type ATPases have 2 components, F(1) - the catalytic core - and F(0) - the membrane proton channel. F(1) has five subunits: alpha(3), beta(3), gamma(1), delta(1), epsilon(1). F(0) has three main subunits: a(1), b(2) and c(10-14). The alpha and beta chains form an alternating ring which encloses part of the gamma chain. F(1) is attached to F(0) by a central stalk formed by the gamma and epsilon chains, while a peripheral stalk is formed by the delta and b chains.

The protein resides in the cell membrane. Functionally, f(1)F(0) ATP synthase produces ATP from ADP in the presence of a proton or sodium gradient. F-type ATPases consist of two structural domains, F(1) containing the extramembraneous catalytic core and F(0) containing the membrane proton channel, linked together by a central stalk and a peripheral stalk. During catalysis, ATP synthesis in the catalytic domain of F(1) is coupled via a rotary mechanism of the central stalk subunits to proton translocation. Its function is as follows. Component of the F(0) channel, it forms part of the peripheral stalk, linking F(1) to F(0). The polypeptide is ATP synthase subunit b (Bifidobacterium adolescentis (strain ATCC 15703 / DSM 20083 / NCTC 11814 / E194a)).